A 311-amino-acid chain; its full sequence is Putative prophage capsid protein YqbE (311 aa).

This sequence belongs to the encapsulin family. Family 3 subfamily.

Possibly a prophage capsid protein. This is Putative prophage capsid protein YqbE (yqbE) from Bacillus subtilis (strain 168).